Reading from the N-terminus, the 836-residue chain is Enhancer of polycomb homolog 1 (836 aa).

Lysine 319 is covalently cross-linked (Glycyl lysine isopeptide (Lys-Gly) (interchain with G-Cter in SUMO2)). Disordered stretches follow at residues 335–360 (KRKY…SPAA) and 372–401 (YDFP…PDGP). Positions 346-360 (PSSAAATPQQTSPAA) are enriched in low complexity. Serine 539 is subject to Phosphoserine. Lysine 673 is covalently cross-linked (Glycyl lysine isopeptide (Lys-Gly) (interchain with G-Cter in SUMO2)). Positions 802–829 (VPSSSSVDSVPRENHESEKPALNNIADN) are disordered. Basic and acidic residues predominate over residues 811 to 820 (VPRENHESEK).

It belongs to the enhancer of polycomb family. Component of the NuA4 histone acetyltransferase complex which contains the catalytic subunit KAT5/TIP60 and the subunits EP400, TRRAP/PAF400, BRD8/SMAP, EPC1, DMAP1/DNMAP1, RUVBL1/TIP49, RUVBL2, ING3, actin, ACTL6A/BAF53A, MORF4L1/MRG15, MORF4L2/MRGX, MRGBP, YEATS4/GAS41, VPS72/YL1 and MEAF6. KAT5/TIP60, EPC1, and ING3 together constitute a minimal HAT complex termed Piccolo NuA4. Component of a NuA4-related complex which contains EP400, TRRAP/PAF400, SRCAP, BRD8/SMAP, EPC1, DMAP1/DNMAP1, RUVBL1/TIP49, RUVBL2, actin, ACTL6A/BAF53A, VPS72 and YEATS4/GAS41. Interacts with TRIM27. Interacts with MBTD1; interaction is direct and promotes recruitment of MBTD1 into the NuA4 histone acetyltransferase complex.

The protein resides in the nucleus. Its subcellular location is the cytoplasm. Its function is as follows. Component of the NuA4 histone acetyltransferase (HAT) complex, a multiprotein complex involved in transcriptional activation of select genes principally by acetylation of nucleosomal histones H4 and H2A. The NuA4 complex plays a direct role in repair of DNA double-strand breaks (DSBs) by promoting homologous recombination (HR). The NuA4 complex is also required for spermatid development by promoting acetylation of histones: histone acetylation is required for histone replacement during the transition from round to elongating spermatids. In the NuA4 complex, EPC1 is required to recruit MBTD1 into the complex. In Homo sapiens (Human), this protein is Enhancer of polycomb homolog 1.